We begin with the raw amino-acid sequence, 969 residues long: Leucine--tRNA ligase (969 aa).

The 'HIGH' region signature appears at 78-89 (PYPSGEGLHVGH). The 'KMSKS' region signature appears at 739-743 (KIGKS). Lys-742 contacts ATP.

Belongs to the class-I aminoacyl-tRNA synthetase family.

It is found in the cytoplasm. The catalysed reaction is tRNA(Leu) + L-leucine + ATP = L-leucyl-tRNA(Leu) + AMP + diphosphate. The sequence is that of Leucine--tRNA ligase from Mycobacterium tuberculosis (strain ATCC 25177 / H37Ra).